The primary structure comprises 1233 residues: Structural maintenance of chromosomes protein 1A (1233 aa).

32 to 39 contacts ATP; it reads GPNGSGKS. Coiled-coil stretches lie at residues 104–124 and 163–503; these read EYKI…LEKL and ELAQ…KAEI. The segment covering 284 to 293 has biased composition (basic and acidic residues); the sequence is IKEKDSELNQ. 2 disordered regions span residues 284 to 308 and 348 to 369; these read IKEK…TSHK and QEFE…TLEE. A phosphoserine mark is found at S358 and S360. Residues 515–629 enclose the SMC hinge domain; that stretch reads VYGRLIDLCQ…DNVEDARRIA (115 aa). N6-acetyllysine occurs at positions 648 and 713. Residues 660-935 are a coiled coil; that stretch reads KAKARRWDEK…RHNLLQACKM (276 aa). The disordered stretch occupies residues 947-966; sequence MDDISQEEGSSQGEDSVSGS. A compositionally biased stretch (low complexity) spans 953-966; it reads EEGSSQGEDSVSGS. S957 bears the Phosphoserine; by ATM mark. S962 carries the post-translational modification Phosphoserine. A Phosphoserine; by ATM and ATR modification is found at S966. Residue S970 is modified to Phosphoserine. Positions 991-1068 form a coiled coil; it reads KDAQAEEEIK…FEQIKKERFD (78 aa). Position 1037 is an N6-acetyllysine (K1037).

It belongs to the SMC family. SMC1 subfamily. As to quaternary structure, forms a heterodimer with SMC3 in cohesin complexes. Cohesin complexes are composed of the SMC1 (SMC1A or SMC1B) and SMC3 heterodimer attached via their SMC hinge domain, RAD21 which link them, and one STAG protein (STAG1, STAG2 or STAG3), which interacts with RAD21. In germ cell cohesin complexes, SMC1A is mutually exclusive with SMC1B. Interacts with BRCA1. Found in a complex with CDCA5, SMC3 and RAD21, PDS5A/SCC-112 and PDS5B/APRIN. Interacts with NDC80. Interacts with BRAT1. Found in a complex containing POLE and SMC3. Interacts with RPGR, STAG3 and SYCP2. The cohesin complex interacts with the cohesin loading complex subunits NIPBL/Scc2 (via HEAT repeats) and MAU2/Scc4. NIPBL directly contacts all members of the complex, RAD21, SMC1A/B, SMC3 and STAG1. Post-translationally, ubiquitinated by the DCX(DCAF15) complex, leading to its degradation. Phosphorylated by ATM upon ionizing radiation in a NBS1-dependent manner. Phosphorylated by ATR upon DNA methylation in a MSH2/MSH6-dependent manner. Phosphorylation of Ser-957 and Ser-966 activates it and is required for S-phase checkpoint activation.

It localises to the nucleus. The protein localises to the chromosome. It is found in the centromere. The protein resides in the kinetochore. In terms of biological role, involved in chromosome cohesion during cell cycle and in DNA repair. Central component of cohesin complex. The cohesin complex is required for the cohesion of sister chromatids after DNA replication. The cohesin complex apparently forms a large proteinaceous ring within which sister chromatids can be trapped. At anaphase, the complex is cleaved and dissociates from chromatin, allowing sister chromatids to segregate. The cohesin complex may also play a role in spindle pole assembly during mitosis. Involved in DNA repair via its interaction with BRCA1 and its related phosphorylation by ATM, or via its phosphorylation by ATR. Works as a downstream effector both in the ATM/NBS1 branch and in the ATR/MSH2 branch of S-phase checkpoint. In Homo sapiens (Human), this protein is Structural maintenance of chromosomes protein 1A (SMC1A).